A 131-amino-acid polypeptide reads, in one-letter code: Transcription antitermination protein NusB (131 aa).

This sequence belongs to the NusB family.

In terms of biological role, involved in transcription antitermination. Required for transcription of ribosomal RNA (rRNA) genes. Binds specifically to the boxA antiterminator sequence of the ribosomal RNA (rrn) operons. In Bacillus subtilis (strain 168), this protein is Transcription antitermination protein NusB.